An 878-amino-acid chain; its full sequence is Valine--tRNA ligase (878 aa).

Residues 45–55 carry the 'HIGH' region motif; that stretch reads PNVTGQLHMGH. A 'KMSKS' region motif is present at residues 524-528; the sequence is KMSKS. K527 is an ATP binding site. Residues 804-871 are a coiled coil; it reads PLKDLIDLEK…REKEVLEQRI (68 aa).

It belongs to the class-I aminoacyl-tRNA synthetase family. ValS type 1 subfamily. As to quaternary structure, monomer.

The protein resides in the cytoplasm. The enzyme catalyses tRNA(Val) + L-valine + ATP = L-valyl-tRNA(Val) + AMP + diphosphate. Catalyzes the attachment of valine to tRNA(Val). As ValRS can inadvertently accommodate and process structurally similar amino acids such as threonine, to avoid such errors, it has a 'posttransfer' editing activity that hydrolyzes mischarged Thr-tRNA(Val) in a tRNA-dependent manner. This Carboxydothermus hydrogenoformans (strain ATCC BAA-161 / DSM 6008 / Z-2901) protein is Valine--tRNA ligase.